The following is a 314-amino-acid chain: Methylglutaconyl-CoA hydratase, mitochondrial (314 aa).

The N-terminal 42 residues, 1-42 (MAAAAPGALGALRTGRVRLVAACCARLGPAAWARGTAPRRGY), are a transit peptide targeting the mitochondrion. An N6-acetyllysine; alternate modification is found at Lys75. An N6-succinyllysine; alternate modification is found at Lys75. Residues 80–94 (KNLLKMLSKAVDALK) form an RNA-binding region. Lys84 carries the post-translational modification N6-succinyllysine. Lys88 and Lys119 each carry N6-acetyllysine; alternate. N6-succinyllysine; alternate occurs at positions 88 and 119. An N6-succinyllysine mark is found at Lys123 and Lys135. 2 positions are modified to N6-acetyllysine; alternate: Lys179 and Lys186. Lys179 and Lys186 each carry N6-succinyllysine; alternate. The residue at position 304 (Lys304) is an N6-succinyllysine.

This sequence belongs to the enoyl-CoA hydratase/isomerase family. Homohexamer. In terms of tissue distribution, detected in heart, brain, liver, spleen, skeletal muscle and kidney. Expressed in brain, kidney, liver and spleen tissue (at protein level).

It localises to the mitochondrion. The catalysed reaction is (3S)-3-hydroxy-3-methylglutaryl-CoA = 3-methyl-(2E)-glutaconyl-CoA + H2O. The enzyme catalyses (3S)-citramalyl-CoA = itaconyl-CoA + H2O. It carries out the reaction 3-hydroxyisovaleryl-CoA = 3-methylbut-2-enoyl-CoA + H2O. It catalyses the reaction (S)-3-hydroxyglutaryl-CoA = (2E)-glutaconyl-CoA + H2O. The protein operates within amino-acid degradation; L-leucine degradation; (S)-3-hydroxy-3-methylglutaryl-CoA from 3-isovaleryl-CoA: step 3/3. In terms of biological role, catalyzes the fifth step in the leucine degradation pathway, the reversible hydration of 3-methylglutaconyl-CoA (3-MG-CoA) to 3-hydroxy-3-methylglutaryl-CoA (HMG-CoA). Can catalyze the reverse reaction but at a much lower rate in vitro. HMG-CoA is then quickly degraded by another enzyme (such as HMG-CoA lyase) to give acetyl-CoA and acetoacetate. Uses other substrates such as (2E)-glutaconyl-CoA efficiently in vitro, and to a lesser extent 3-methylcrotonyl-CoA (3-methyl-(2E)-butenoyl-CoA), crotonyl-CoA ((2E)-butenoyl-CoA) and 3-hydroxybutanoyl-CoA (the missing carboxylate reduces affinity to the active site). Originally it was identified as an RNA-binding protein as it binds to AU-rich elements (AREs) in vitro. AREs direct rapid RNA degradation and mRNA deadenylation. Might have itaconyl-CoA hydratase activity, converting itaconyl-CoA into citramalyl-CoA in the C5-dicarboxylate catabolism pathway. The C5-dicarboxylate catabolism pathway is required to detoxify itaconate, an antimicrobial metabolite and immunomodulator produced by macrophages during certain infections, that can act as a vitamin B12-poisoning metabolite. The sequence is that of Methylglutaconyl-CoA hydratase, mitochondrial (Auh) from Mus musculus (Mouse).